Here is a 70-residue protein sequence, read N- to C-terminus: Cold shock-like protein CspH (70 aa).

The CSD domain occupies 7 to 67; the sequence is GIVKTFDRKS…GLRGPTAANV (61 aa).

It is found in the cytoplasm. The chain is Cold shock-like protein CspH (cspH) from Escherichia coli O6:H1 (strain CFT073 / ATCC 700928 / UPEC).